The following is a 270-amino-acid chain: Putative serine acetyltransferase (270 aa).

Belongs to the transferase hexapeptide repeat family.

It is found in the cytoplasm. The protein resides in the nucleus. It carries out the reaction L-serine + acetyl-CoA = O-acetyl-L-serine + CoA. It participates in amino-acid biosynthesis; L-cysteine biosynthesis; L-cysteine from L-serine: step 1/2. The polypeptide is Putative serine acetyltransferase (Schizosaccharomyces pombe (strain 972 / ATCC 24843) (Fission yeast)).